We begin with the raw amino-acid sequence, 120 residues long: NAD(P)H-quinone oxidoreductase subunit 3, chloroplastic (120 aa).

The next 3 helical transmembrane spans lie at 9 to 29 (IFWA…LISG), 64 to 84 (MFAL…PWAM), and 88 to 108 (VLGV…IVGL).

This sequence belongs to the complex I subunit 3 family. NDH is composed of at least 16 different subunits, 5 of which are encoded in the nucleus.

The protein resides in the plastid. The protein localises to the chloroplast thylakoid membrane. The catalysed reaction is a plastoquinone + NADH + (n+1) H(+)(in) = a plastoquinol + NAD(+) + n H(+)(out). The enzyme catalyses a plastoquinone + NADPH + (n+1) H(+)(in) = a plastoquinol + NADP(+) + n H(+)(out). NDH shuttles electrons from NAD(P)H:plastoquinone, via FMN and iron-sulfur (Fe-S) centers, to quinones in the photosynthetic chain and possibly in a chloroplast respiratory chain. The immediate electron acceptor for the enzyme in this species is believed to be plastoquinone. Couples the redox reaction to proton translocation, and thus conserves the redox energy in a proton gradient. The protein is NAD(P)H-quinone oxidoreductase subunit 3, chloroplastic of Lupinus luteus (European yellow lupine).